A 256-amino-acid polypeptide reads, in one-letter code: Trypsin, alkaline B (256 aa).

Positions 1–17 are cleaved as a signal peptide; that stretch reads MRLFLALLALGFAAVAA. Residues 18 to 24 constitute a propeptide, activation peptide; the sequence is VPANPQR. The Peptidase S1 domain occupies 25–256; sequence IVGGSTTTIQ…RFANWIRNNS (232 aa). Residues Cys55 and Cys71 are joined by a disulfide bond. Catalysis depends on charge relay system residues His70 and Asp115. 2 disulfides stabilise this stretch: Cys180/Cys197 and Cys209/Cys233. Ser213 serves as the catalytic Charge relay system.

This sequence belongs to the peptidase S1 family. Midgut.

The protein localises to the secreted. It is found in the extracellular space. The enzyme catalyses Preferential cleavage: Arg-|-Xaa, Lys-|-Xaa.. This Manduca sexta (Tobacco hawkmoth) protein is Trypsin, alkaline B.